Consider the following 219-residue polypeptide: Peroxiredoxin-5, mitochondrial (219 aa).

Residues Met-1–Ala-57 constitute a mitochondrion transit peptide. A Thioredoxin domain is found at Ile-61–Leu-219. Lys-80 carries the N6-acetyllysine modification. Lys-88 carries the post-translational modification N6-acetyllysine; alternate. Lys-88 carries the post-translational modification N6-succinyllysine; alternate. Catalysis depends on Cys-105, which acts as the Cysteine sulfenic acid (-SOH) intermediate. Residue Cys-105 is the site of S-palmitoyl cysteine attachment. Cys-105 and Cys-209 are disulfide-bonded. An N6-succinyllysine modification is found at Lys-121. Phosphoserine is present on Ser-187. The short motif at Ser-217 to Leu-219 is the Microbody targeting signal element.

Belongs to the peroxiredoxin family. Prx5 subfamily. In terms of assembly, monomer. Post-translationally, S-palmitoylated. Palmitoylation occurs on the active site, inhibiting its reactivity; therefore PRDX5 palmitoylation status determines its antioxidant capacity. In terms of processing, S-palmitoylated. Depalmitoylated by ABHD10.

The protein localises to the mitochondrion. The protein resides in the cytoplasm. Its subcellular location is the peroxisome matrix. It catalyses the reaction a hydroperoxide + [thioredoxin]-dithiol = an alcohol + [thioredoxin]-disulfide + H2O. In terms of biological role, thiol-specific peroxidase that catalyzes the reduction of hydrogen peroxide and organic hydroperoxides to water and alcohols, respectively. Plays a role in cell protection against oxidative stress by detoxifying peroxides and as sensor of hydrogen peroxide-mediated signaling events. This is Peroxiredoxin-5, mitochondrial (PRDX5) from Bos taurus (Bovine).